The following is a 412-amino-acid chain: Short-chain specific acyl-CoA dehydrogenase, mitochondrial (412 aa).

The transit peptide at 1 to 24 (MAAALLARASGPARRALCPRAWRQ) directs the protein to the mitochondrion. Residue T27 is modified to Phosphothreonine. N6-acetyllysine; alternate is present on K51. K51 is modified (N6-succinyllysine; alternate). Residue K72 is modified to N6-acetyllysine. An N6-acetyllysine; alternate modification is found at K129. At K129 the chain carries N6-succinyllysine; alternate. Residues 152–161 (FALSEPGNGS) and 185–187 (WIT) each bind FAD. S161 serves as a coordination point for substrate. At K208 the chain carries N6-acetyllysine. An N6-acetyllysine; alternate modification is found at K262. An N6-succinyllysine; alternate modification is found at K262. 269–272 (DMGR) lines the substrate pocket. R297 is an FAD binding site. K306 carries the N6-acetyllysine; alternate modification. Residue K306 is modified to N6-succinyllysine; alternate. FAD is bound by residues Q308 and 365–369 (QILGG). The active-site Proton acceptor is the E392. G393 is a substrate binding site. FAD is bound at residue 394–396 (TSE).

The protein belongs to the acyl-CoA dehydrogenase family. Homotetramer. Requires FAD as cofactor.

Its subcellular location is the mitochondrion matrix. It carries out the reaction a short-chain 2,3-saturated fatty acyl-CoA + oxidized [electron-transfer flavoprotein] + H(+) = a short-chain (2E)-enoyl-CoA + reduced [electron-transfer flavoprotein]. It catalyses the reaction butanoyl-CoA + oxidized [electron-transfer flavoprotein] + H(+) = (2E)-butenoyl-CoA + reduced [electron-transfer flavoprotein]. The enzyme catalyses pentanoyl-CoA + oxidized [electron-transfer flavoprotein] + H(+) = (2E)-pentenoyl-CoA + reduced [electron-transfer flavoprotein]. The catalysed reaction is hexanoyl-CoA + oxidized [electron-transfer flavoprotein] + H(+) = (2E)-hexenoyl-CoA + reduced [electron-transfer flavoprotein]. Its pathway is lipid metabolism; mitochondrial fatty acid beta-oxidation. Short-chain specific acyl-CoA dehydrogenase is one of the acyl-CoA dehydrogenases that catalyze the first step of mitochondrial fatty acid beta-oxidation, an aerobic process breaking down fatty acids into acetyl-CoA and allowing the production of energy from fats. The first step of fatty acid beta-oxidation consists in the removal of one hydrogen from C-2 and C-3 of the straight-chain fatty acyl-CoA thioester, resulting in the formation of trans-2-enoyl-CoA. Among the different mitochondrial acyl-CoA dehydrogenases, short-chain specific acyl-CoA dehydrogenase acts specifically on acyl-CoAs with saturated 4 to 6 carbons long primary chains. The polypeptide is Short-chain specific acyl-CoA dehydrogenase, mitochondrial (ACADS) (Homo sapiens (Human)).